The sequence spans 698 residues: Glycine--tRNA ligase beta subunit (698 aa).

The protein belongs to the class-II aminoacyl-tRNA synthetase family. As to quaternary structure, tetramer of two alpha and two beta subunits.

Its subcellular location is the cytoplasm. It catalyses the reaction tRNA(Gly) + glycine + ATP = glycyl-tRNA(Gly) + AMP + diphosphate. The chain is Glycine--tRNA ligase beta subunit from Xanthomonas campestris pv. campestris (strain 8004).